The following is a 508-amino-acid chain: MARFVDRVVLHLEAGDGGNGCASVHREKFKPLGGPDGGNGGHGGDIILTVSPQAHTLLDLHYRPHLKAQRGANGAGDHRNGARGQDLVLEVPAGTVVMSESGETLADLTSPGMTFIAAKGGFGGLGNAALASAARKAPGFALKGEPGEQHDVILELKSMADIGLVGFPSAGKSSLISVMSAAKPKIGDYPFTTLQPNLGVVDMGNDAFTIADVPGLIPGASQGKGLGLDFLRHIERTAVLAHVVDAATLEPGRDPISDIEALEEELAAYQSALDEDTSLGDLRERARIVILNKADIPDALELAEFLKEDIEEKFGWPVFIISAVARKGLDPLKYAMLDLVQQSRKKRPKQKVEERIVVRPQAVDARKKNKDFEILADPQVENGYLVVGEKPERWIIQTDFENDEAVGYLADRLARMGVEDALWKKGARAGCTVTIGEVSFEWEPTTAAGVEVQMSGRGTDMRLERNTRVSAQERKRASQVRRGLIDEYDFGDDQKVTRESANRDRWQG.

Residues 2 to 159 (ARFVDRVVLH…HDVILELKSM (158 aa)) form the Obg domain. In terms of domain architecture, OBG-type G spans 160 to 341 (ADIGLVGFPS…LKYAMLDLVQ (182 aa)). GTP is bound by residues 166 to 173 (GFPSAGKS), 191 to 195 (FTTLQ), 212 to 215 (DVPG), 292 to 295 (NKAD), and 322 to 324 (SAV). Positions 173 and 193 each coordinate Mg(2+). The region spanning 364–444 (DARKKNKDFE…IGEVSFEWEP (81 aa)) is the OCT domain.

This sequence belongs to the TRAFAC class OBG-HflX-like GTPase superfamily. OBG GTPase family. In terms of assembly, monomer. Requires Mg(2+) as cofactor.

Its subcellular location is the cytoplasm. An essential GTPase which binds GTP, GDP and possibly (p)ppGpp with moderate affinity, with high nucleotide exchange rates and a fairly low GTP hydrolysis rate. Plays a role in control of the cell cycle, stress response, ribosome biogenesis and in those bacteria that undergo differentiation, in morphogenesis control. The chain is GTPase Obg from Corynebacterium diphtheriae (strain ATCC 700971 / NCTC 13129 / Biotype gravis).